A 248-amino-acid polypeptide reads, in one-letter code: Probable transcriptional regulatory protein RPD_4171 (248 aa).

Residues 1–22 are disordered; sequence MAGHSQFKNIMHRKGKQDAQRS.

This sequence belongs to the TACO1 family.

It localises to the cytoplasm. This is Probable transcriptional regulatory protein RPD_4171 from Rhodopseudomonas palustris (strain BisB5).